We begin with the raw amino-acid sequence, 363 residues long: Spermidine/putrescine import ATP-binding protein PotA (363 aa).

An ABC transporter domain is found at 6–236 (VEFKNVIKKY…PINHFVADFI (231 aa)). 38 to 45 (GPSGCGKT) contributes to the ATP binding site.

Belongs to the ABC transporter superfamily. Spermidine/putrescine importer (TC 3.A.1.11.1) family. In terms of assembly, the complex is composed of two ATP-binding proteins (PotA), two transmembrane proteins (PotB and PotC) and a solute-binding protein (PotD).

Its subcellular location is the cell membrane. The catalysed reaction is ATP + H2O + polyamine-[polyamine-binding protein]Side 1 = ADP + phosphate + polyamineSide 2 + [polyamine-binding protein]Side 1.. Part of the ABC transporter complex PotABCD involved in spermidine/putrescine import. Responsible for energy coupling to the transport system. The sequence is that of Spermidine/putrescine import ATP-binding protein PotA from Latilactobacillus sakei subsp. sakei (strain 23K) (Lactobacillus sakei subsp. sakei).